Here is a 310-residue protein sequence, read N- to C-terminus: Ribosomal RNA small subunit methyltransferase H (310 aa).

S-adenosyl-L-methionine contacts are provided by residues 32–34 (GGH), Asp-52, Phe-79, Asp-100, and Gln-107.

Belongs to the methyltransferase superfamily. RsmH family.

It is found in the cytoplasm. The catalysed reaction is cytidine(1402) in 16S rRNA + S-adenosyl-L-methionine = N(4)-methylcytidine(1402) in 16S rRNA + S-adenosyl-L-homocysteine + H(+). In terms of biological role, specifically methylates the N4 position of cytidine in position 1402 (C1402) of 16S rRNA. This is Ribosomal RNA small subunit methyltransferase H from Bacillus anthracis (strain A0248).